The following is a 151-amino-acid chain: Small ribosomal subunit protein bS6 (151 aa).

The tract at residues 96 to 151 (HEEGQSAMLTRRDDRRERDGDDRPRRREGGFDRGDRGDRGDRGPRRPRDNEAGEGA) is disordered.

The protein belongs to the bacterial ribosomal protein bS6 family.

In terms of biological role, binds together with bS18 to 16S ribosomal RNA. This Brucella anthropi (strain ATCC 49188 / DSM 6882 / CCUG 24695 / JCM 21032 / LMG 3331 / NBRC 15819 / NCTC 12168 / Alc 37) (Ochrobactrum anthropi) protein is Small ribosomal subunit protein bS6.